The sequence spans 287 residues: Nuclease S1 (287 aa).

The N-terminal stretch at 1–20 is a signal peptide; the sequence is MPRLLPISAATLALAQLTYG. A divalent metal cation is bound by residues Trp21, His26, Asp65, and His80. Residues 21–26, 65–71, 80–83, and 93–98 contribute to the substrate site; these read WGNLGH, DTYKYTD, HFID, and GVDYDR. 2 disulfide bridges follow: Cys92/Cys236 and Cys100/Cys105. Asn112 and Asn122 each carry an N-linked (GlcNAc...) asparagine glycan. A divalent metal cation-binding residues include His135, Asp139, His145, His168, and Asp172. A substrate binding region spans residues 135 to 183; that stretch reads HIIGDIHQPLHDENLEAGGNGIDVTYDGETTNLHHIWDTNMPEEAAGGY. Asn248 carries N-linked (GlcNAc...) asparagine glycosylation.

It belongs to the nuclease type I family. Monomer. Zn(2+) is required as a cofactor.

The enzyme catalyses Endonucleolytic cleavage to 5'-phosphomononucleotide and 5'-phosphooligonucleotide end-products.. With respect to regulation, inhibited by inorganic phosphate (Pi). Hydrolyzes only single-stranded DNA and RNA without apparent specificity for bases. This chain is Nuclease S1, found in Aspergillus oryzae (strain ATCC 42149 / RIB 40) (Yellow koji mold).